The primary structure comprises 2643 residues: MDGRDFAPPPHLLSERGSLGHRSAAAAARLAPAGPAAQPAAHFQPGKYFPSPLPMASHTASSRLMGNPPASSFMGSFLTSSLGSAASAHPSGPTSSPSEPAYRGSHPATSQIWFSHSHEAPAYPRFSGSLASTFLPVSHLDHHGNSNVLYGQHRFYGTQKDNFYLRNLPPQPTILPANHNFPGVPRATPAHPIGSCSRDRIEAASLQKGPKEFDRFLMGKEVGKEKVSKGAEGRERPAVEEDSGKDRQKLVPPMPAEGPCKEAGPAPRGSCEGRPKHLTSCLLNTKVLNGDMGKASLASCAGGMLGRPGTGVAAPGRCAKEVAGPVEPGPAFSECLERRQMLHHAVSYTVPSGLPTGPPPPLSTGPAGSFPCLQLHAGPDGLCPLQDKVSRDLKASGPTFVPSVGHLADKSRSFQVAEACAVAGDGKDRHLDAAMATDHGAPYGVSYAHLKAEGKGERRPGGFEAALHPRLKGLEYLSSGPEAPFPGLPKGGLDKSGYFELPTSQDCARSNHQDPLGGKATQACCTLDKVANKEAPAGPPVGQKVARIRHQQHLVAPEVESGGSGAETKRKSVELASLGYSGHHMPPWGVQTGHDTSMAIIEERKGSAYLDPFGSGLQQAALLSQELPTPPDEVSAMKNLLKYSNQALVVGQKAPFVGLGSLKASCVQQEAKFPATKGPGPVERPDCARSREHEAPHGDGEVRQPPVGIAVALARQKDTVGRPDTAYNTNSGRQGRAAPTFKGAGGPRASHALDLESEEERSRACEERLGLPGRELLLQDNKDLVEFARIHPSSSCPGDLPPHLMMQGGDPAPHPHPAHPHWLPRTRSPSLWMGGHSYGLGHPALHQNLPPGFPASVPGSMPSVFPLPQDAATQLVILPSEPTPHTTPHTLAEVMDQASLWPPMYGARGPASHMQHPGQLPVYSRSQLLRQQELYALQQQQQQQQQQQQQQQQQQQQQQQQQQQQQQQHRATQALELQRVAQFQRKPEDRHMELEEAAQEKTPKSTHKPVALTPMAKGTPSSATAGLVKLSPCCQSPTLKTPASCPTPPPRPSAPCTLPICPTGSPGPGSKVPSTMDKSEEGQRAGTNLTTLEPDLTPGLNPTAGLDLSLPSDVHSSDLQDPKTMQTTTPGTRPEPPRTFLPGEPPPCSPRNLEEPGLLSRARDATQDLANLPPPVEGGLPPGKAEDPSPLEGLQALKFGDLLEGGGTEATGQTNSTQGGMQNERTVDQGAPQPPLGATPQALEQEAGSPAALDKREGPQKVPDVAQLQEEETQLEESGGDSEVDWGTPNHSHPPKALPGLDALVAATVDLGDLPDISLTDPQTPAASVPLSTAPLPHSSGIHGIALLSELADLETQRQKSELSMQEDEDVLAFNLQHLATLATAWSLVEAANLDSPVTSLQAPAADPDRGPRLTPRMQILQRKDTWAPKTKPVCPLKAAIDRLDTQEVEMRMQLAELQRRYKEKQRELARLQRRHDHEREESSRSPARRGPGRPRKRKHSSSLPALRPGGQLARSDSKKAKAVRASLSLLCAELRGDEPPRKRSKLGKSPYTGLQSVSSEKVRCKKSCGQAELPSSVAHKVAQLKPKVKSKGLPAGLGAFQRKEAAPGGRIQKKLSRAKSVTASGAARHPHPDGDSGREMHKFQAQPAVAVAHEAGSGYDSEDCQALLGTEAAPREPGLVLHPGSGVAVLGPSPSSVVKMEANQKAKKKKERQGLLGACRLSSPEGEVKIKRRTVKTKVGAKLERAPGRRPPGAPGKKKAKGKVKTGLRTEPGTATSRDTLFSPTRTFACREEGSKLASERLKRATRKSAMLQPVLRRKNGALSIALSARNAKAILGKSRKLTKVKREAVSKQGQGRAVSRLLESFAVEDDFEFDEDDTSFSDEEEEEEEAGVQLSAEQSAALARSCTIHKEDLQDGLPVLIPKEDSLLYAGSVRTLQPPDIYSIVIEGERGNRQRIYSLEQLLQEAVLDVQPQSSRYLPPGTRVCAYWSQKSRCLYPGNVVRGASSDEEDLDSVLVEFDDGDTGHIAVSNIRLLPPDFKIQCTEPSPALLVSSSCRRTKKAANEGHPPSEAPTPSLSPKVPDGPETSKTPGKKSGSKDKAGKVDLLTSGAKSPTGASDHFLGRRGSPLLSWSAVAQTKRKAVAAAAAAAGGKGPGVLQNLFQLNGSTKKLRARDTLFPMHSMATPVFGNSFRADSFSSLASSYTPFLGGAGAGLPGGAHKLLRAKKAERAEAEKAGRRRAGGEFLVKLDHEGVTSPKNKNCKALLMSDKDFGPKLGRPLSNPSYAHPALIGKDKKGRAPVHPLPMGLALRKYPLPCDSDCPSSYSDEDEDGPGLATGVPSRFLTRLSMSSSSSGSSTSSSSGSVSTSSLCSSDNEDSSYSSDDEDPALLLQTCLTRPVPALLAPPEALRSKGSSPHAHTHAQRCFLSRAGVAGAGAGASPSGSKSKFKRKEALSFSKAKELSRRQRLPSVENRPKISAFLPARQLWKWSGNPTQRRGMKGKARKLFYKAIVRGKETLRIGDCAVFLSAGRPNLPYIGRIESLWESWGSNMVVKVKWFYHPEETKLGKRQSDGKNALYQSCHEDENDVQTISHKCQVVGREQYEQMMRGRKYQDQQDLYYLAGTYDPTTGRLVTADGVPVLC.

2 disordered regions span residues 23–45 (SAAA…HFQP) and 84–106 (SAAS…RGSH). Position 220 is an N6-acetyllysine (K220). Basic and acidic residues-rich tracts occupy residues 224-249 (KEKV…DRQK) and 683-702 (ERPD…DGEV). Disordered regions lie at residues 224–273 (KEKV…SCEG), 674–704 (PATK…EVRQ), 721–758 (GRPD…LESE), 985–1023 (RKPE…PSSA), and 1038–1299 (TLKT…KALP). Basic and acidic residues predominate over residues 985 to 1003 (RKPEDRHMELEEAAQEKTP). Positions 1133–1149 (RPEPPRTFLPGEPPPCS) are enriched in pro residues. The segment covering 1210 to 1224 (ATGQTNSTQGGMQNE) has biased composition (polar residues). Residues 1269–1284 (QEEETQLEESGGDSEV) are compositionally biased toward acidic residues. Coiled coils occupy residues 1346–1373 (ALLS…DVLA) and 1437–1486 (LKAA…SSRS). A compositionally biased stretch (basic and acidic residues) spans 1466 to 1484 (QRELARLQRRHDHEREESS). Disordered regions lie at residues 1466–1520 (QREL…DSKK), 1537–1559 (GDEP…QSVS), 1604–1641 (KEAA…GREM), 1746–1781 (RAPG…SRDT), 1875–1896 (FDED…GVQL), 2055–2124 (SSCR…HFLG), 2322–2341 (CPSS…TGVP), and 2349–2386 (SMSS…SDDE). The segment covering 1487–1501 (PARRGPGRPRKRKHS) has biased composition (basic residues). A compositionally biased stretch (basic and acidic residues) spans 1631–1641 (PHPDGDSGREM). A compositionally biased stretch (basic residues) spans 1757 to 1767 (GKKKAKGKVKT). Positions 1875 to 1892 (FDEDDTSFSDEEEEEEEA) are enriched in acidic residues. Residues 2349–2374 (SMSSSSSGSSTSSSSGSVSTSSLCSS) are compositionally biased toward low complexity. Residues 2375 to 2386 (DNEDSSYSSDDE) are compositionally biased toward acidic residues. Residues 2517-2637 (ETLRIGDCAV…PTTGRLVTAD (121 aa)) form the BAH domain.

This is BAH and coiled-coil domain-containing protein 1 (Bahcc1) from Mus musculus (Mouse).